The primary structure comprises 39 residues: Photosystem II reaction center protein J (39 aa).

The helical transmembrane segment at 7–27 (IPLWLVATIAGLGVIAVLGLF) threads the bilayer.

The protein belongs to the PsbJ family. As to quaternary structure, PSII is composed of 1 copy each of membrane proteins PsbA, PsbB, PsbC, PsbD, PsbE, PsbF, PsbH, PsbI, PsbJ, PsbK, PsbL, PsbM, PsbT, PsbX, PsbY, PsbZ, Psb30/Ycf12, peripheral proteins PsbO, CyanoQ (PsbQ), PsbU, PsbV and a large number of cofactors. It forms dimeric complexes.

It localises to the cellular thylakoid membrane. Functionally, one of the components of the core complex of photosystem II (PSII). PSII is a light-driven water:plastoquinone oxidoreductase that uses light energy to abstract electrons from H(2)O, generating O(2) and a proton gradient subsequently used for ATP formation. It consists of a core antenna complex that captures photons, and an electron transfer chain that converts photonic excitation into a charge separation. The chain is Photosystem II reaction center protein J from Microcystis aeruginosa (strain NIES-843 / IAM M-2473).